The following is a 309-amino-acid chain: Ribosomal RNA small subunit methyltransferase H (309 aa).

Residues Gly33 to His35, Asp53, Phe79, Asp100, and Gln107 each bind S-adenosyl-L-methionine.

The protein belongs to the methyltransferase superfamily. RsmH family.

The protein resides in the cytoplasm. It catalyses the reaction cytidine(1402) in 16S rRNA + S-adenosyl-L-methionine = N(4)-methylcytidine(1402) in 16S rRNA + S-adenosyl-L-homocysteine + H(+). Functionally, specifically methylates the N4 position of cytidine in position 1402 (C1402) of 16S rRNA. In Clostridium botulinum (strain Loch Maree / Type A3), this protein is Ribosomal RNA small subunit methyltransferase H.